The chain runs to 144 residues: MIQMQTNLDVADNSGARRVMCIKVLGGSKRKYAHVGDIIVVSVKEAIPRGRVKKGDVMKAVVVRTAKDIRRVDGSVIRFDRNAAVLINNKRAQSWDQTIALSIARRNEGYTHSQHSNQREGGERIQAQPSPPHARRAVKTSFCR.

Residues 107 to 144 are disordered; that stretch reads NEGYTHSQHSNQREGGERIQAQPSPPHARRAVKTSFCR.

This sequence belongs to the universal ribosomal protein uL14 family. In terms of assembly, part of the 50S ribosomal subunit. Forms a cluster with proteins L3 and L19. In the 70S ribosome, L14 and L19 interact and together make contacts with the 16S rRNA in bridges B5 and B8.

Functionally, binds to 23S rRNA. Forms part of two intersubunit bridges in the 70S ribosome. This Xanthobacter autotrophicus (strain ATCC BAA-1158 / Py2) protein is Large ribosomal subunit protein uL14.